A 535-amino-acid chain; its full sequence is CTP synthase (535 aa).

Positions 1–267 (MTKYIFVTGG…DKLVCEHMKL (267 aa)) are amidoligase domain. S13 lines the CTP pocket. Residue S13 participates in UTP binding. 14–19 (SLGKGI) is a binding site for ATP. An L-glutamine-binding site is contributed by Y54. D71 is an ATP binding site. Mg(2+) contacts are provided by D71 and E141. Residues 148–150 (DIE), 188–193 (KTKPTQ), and K224 each bind CTP. UTP is bound by residues 188–193 (KTKPTQ) and K224. In terms of domain architecture, Glutamine amidotransferase type-1 spans 292 to 534 (TIGLVGKYVE…VGASLQASES (243 aa)). L-glutamine is bound at residue G354. The Nucleophile; for glutamine hydrolysis role is filled by C381. L-glutamine is bound by residues 382–385 (LGMQ), E405, and R462. Active-site residues include H507 and E509.

This sequence belongs to the CTP synthase family. Homotetramer.

The catalysed reaction is UTP + L-glutamine + ATP + H2O = CTP + L-glutamate + ADP + phosphate + 2 H(+). It catalyses the reaction L-glutamine + H2O = L-glutamate + NH4(+). It carries out the reaction UTP + NH4(+) + ATP = CTP + ADP + phosphate + 2 H(+). Its pathway is pyrimidine metabolism; CTP biosynthesis via de novo pathway; CTP from UDP: step 2/2. Its activity is regulated as follows. Allosterically activated by GTP, when glutamine is the substrate; GTP has no effect on the reaction when ammonia is the substrate. The allosteric effector GTP functions by stabilizing the protein conformation that binds the tetrahedral intermediate(s) formed during glutamine hydrolysis. Inhibited by the product CTP, via allosteric rather than competitive inhibition. In terms of biological role, catalyzes the ATP-dependent amination of UTP to CTP with either L-glutamine or ammonia as the source of nitrogen. Regulates intracellular CTP levels through interactions with the four ribonucleotide triphosphates. The chain is CTP synthase from Bacillus pumilus (strain SAFR-032).